The primary structure comprises 417 residues: Laccase-like protein claX (417 aa).

Belongs to the multicopper oxidase family.

In terms of biological role, laccase-like protein; part of the gene cluster that mediates the biosynthesis of clavilactone A, a meroterpenoid that features a unique benzo-fused ten-membered carbocyclic ring unit with an alpha,beta-epoxy-gamma-lactone moiety, forming an intriguing 10/5/3 tricyclic nested skeleton. ClaR, ClaS and ClaT are sufficient to produce clavilactone A and the function of claX, if any, has still to be identified. The biosynthesis begins with the prenyltransferase claS that transfers geranyl pyrophosphate (GPP) to hydroquinone to produces geranylhydroquinon. The cytochrome P450 monooxygenase claR then catalyzes the diradical coupling reaction between the intramolecular hydroquinone and allyl moieties to form the benzo-fused ten-membered carbocyclic ring unit of wigantol. Finally the cytochrome P450 monooxygenase claT exquisitely and stereoselectively assembles the alpha,beta-epoxy-gamma-lactone moiety, producing clavilactone A via arnebinol A. The chain is Laccase-like protein claX from Ampulloclitocybe clavipes (Club foot).